The following is a 420-amino-acid chain: Putative movement protein (420 aa).

Low complexity-rich tracts occupy residues 1 to 18 and 30 to 59; these read MPLTPTPSTRPSRPTSFS and TSCSSSLRSSPSSSPDSPTSPTSSTTGSCP. Disordered stretches follow at residues 1 to 77, 137 to 181, 195 to 219, 235 to 281, 327 to 370, and 396 to 420; these read MPLT…TARP, SMSR…SARS, RPKTSLPSAFRTPSPSPLLPPSTRT, IMSE…RPPP, PSAG…RPIQ, and LPPPSGRVCSPRPLRRPGSPTQPWP. A compositionally biased stretch (pro residues) spans 60 to 69; sequence KTPPGTPPLP. Residues 137-157 show a composition bias toward polar residues; the sequence is SMSRRATQPPTTRSRVRPSTG. Low complexity predominate over residues 158 to 181; that stretch reads SRPPVSPLVTSSSPSPFSTLSARS. Residues 253-263 show a composition bias toward polar residues; it reads GLRSASLSTAG. Low complexity predominate over residues 327–348; the sequence is PSAGSSPFTPTVSGCSASTSSA.

Functionally, cell-to-cell movement. The sequence is that of Putative movement protein from Maize rayado fino virus (isolate Costa Rica/Guapiles) (MRFV).